Consider the following 431-residue polypeptide: Beta-lactamase hydrolase-like protein (431 aa).

Residues His212, His214, and His286 each coordinate Zn(2+). A substrate-binding site is contributed by Asp309.

The protein belongs to the metallo-beta-lactamase superfamily. It depends on Zn(2+) as a cofactor.

In terms of biological role, could play a role in cell adherence or biofilm development. This is Beta-lactamase hydrolase-like protein from Agrobacterium fabrum (strain C58 / ATCC 33970) (Agrobacterium tumefaciens (strain C58)).